The following is a 357-amino-acid chain: tRNA N6-adenosine threonylcarbamoyltransferase (357 aa).

Positions 120 and 124 each coordinate Fe cation. Residues leucine 143 to glycine 147, aspartate 176, glycine 189, and asparagine 289 each bind substrate. Position 317 (aspartate 317) interacts with Fe cation.

This sequence belongs to the KAE1 / TsaD family. Fe(2+) serves as cofactor.

The protein resides in the cytoplasm. It catalyses the reaction L-threonylcarbamoyladenylate + adenosine(37) in tRNA = N(6)-L-threonylcarbamoyladenosine(37) in tRNA + AMP + H(+). Required for the formation of a threonylcarbamoyl group on adenosine at position 37 (t(6)A37) in tRNAs that read codons beginning with adenine. Is involved in the transfer of the threonylcarbamoyl moiety of threonylcarbamoyl-AMP (TC-AMP) to the N6 group of A37, together with TsaE and TsaB. TsaD likely plays a direct catalytic role in this reaction. The protein is tRNA N6-adenosine threonylcarbamoyltransferase of Polynucleobacter necessarius subsp. necessarius (strain STIR1).